The chain runs to 353 residues: Nicotinate-nucleotide--dimethylbenzimidazole phosphoribosyltransferase (353 aa).

Catalysis depends on Glu320, which acts as the Proton acceptor.

The protein belongs to the CobT family.

It carries out the reaction 5,6-dimethylbenzimidazole + nicotinate beta-D-ribonucleotide = alpha-ribazole 5'-phosphate + nicotinate + H(+). It functions in the pathway nucleoside biosynthesis; alpha-ribazole biosynthesis; alpha-ribazole from 5,6-dimethylbenzimidazole: step 1/2. Catalyzes the synthesis of alpha-ribazole-5'-phosphate from nicotinate mononucleotide (NAMN) and 5,6-dimethylbenzimidazole (DMB). This is Nicotinate-nucleotide--dimethylbenzimidazole phosphoribosyltransferase from Syntrophotalea carbinolica (strain DSM 2380 / NBRC 103641 / GraBd1) (Pelobacter carbinolicus).